A 334-amino-acid polypeptide reads, in one-letter code: Leucine-rich repeat-containing protein 39 (334 aa).

The stretch at 10–47 (AVNAVKEVWEKRIKKLNEDLKREKEFQQKLVRIWEERV) forms a coiled coil. LRR repeat units lie at residues 84–105 (QLQE…IGRF), 107–128 (NLIV…IGLL), 130–151 (RLQE…LSYC), 153–176 (SLEK…SNLL), 177–198 (KLTH…VLNM), 200–221 (ALEW…IERM), 223–244 (NLHT…ISSM), 246–267 (NLST…MEKM), and 269–290 (NLRF…PPSE).

In terms of assembly, interacts with MYH7 (via C-terminus).

Its subcellular location is the cytoplasm. The protein resides in the myofibril. It localises to the sarcomere. It is found in the m line. Component of the sarcomeric M-band which plays a role in myocyte response to biomechanical stress. May regulate expression of other M-band proteins via an SRF-dependent pathway. Important for normal contractile function in heart. In Bos taurus (Bovine), this protein is Leucine-rich repeat-containing protein 39.